The chain runs to 401 residues: Beta-ketoadipyl-CoA thiolase (401 aa).

Residue cysteine 90 is the Acyl-thioester intermediate of the active site. Active-site proton acceptor residues include histidine 357 and cysteine 387.

It belongs to the thiolase-like superfamily. Thiolase family.

It catalyses the reaction succinyl-CoA + acetyl-CoA = 3-oxoadipyl-CoA + CoA. It participates in aromatic compound metabolism; beta-ketoadipate pathway; acetyl-CoA and succinyl-CoA from 3-oxoadipate: step 2/2. Its function is as follows. Catalyzes thiolytic cleavage of beta-ketoadipyl-CoA to succinyl-CoA and acetyl-CoA. The polypeptide is Beta-ketoadipyl-CoA thiolase (catF) (Acinetobacter baylyi (strain ATCC 33305 / BD413 / ADP1)).